Reading from the N-terminus, the 650-residue chain is Aminopeptidase B (650 aa).

The residue at position 2 (alanine 2) is an N-acetylalanine. Position 7 is a phosphoserine (serine 7). 298–302 (GGMEN) provides a ligand contact to substrate. Histidine 325 contributes to the Zn(2+) binding site. Catalysis depends on glutamate 326, which acts as the Proton acceptor. Zn(2+) contacts are provided by histidine 329 and glutamate 348. Lysine 446 bears the N6-acetyllysine mark.

Belongs to the peptidase M1 family. Zn(2+) is required as a cofactor.

It is found in the secreted. It catalyses the reaction Release of N-terminal Arg and Lys from oligopeptides when P1' is not Pro. Also acts on arylamides of Arg and Lys.. In terms of biological role, exopeptidase which selectively removes arginine and/or lysine residues from the N-terminus of several peptide substrates including Arg(0)-Leu-enkephalin, Arg(0)-Met-enkephalin and Arg(-1)-Lys(0)-somatostatin-14. Can hydrolyze leukotriene A4 (LTA-4) into leukotriene B4 (LTB-4). This Homo sapiens (Human) protein is Aminopeptidase B (RNPEP).